Consider the following 448-residue polypeptide: Protein odr-4 homolog (448 aa).

Helical transmembrane passes span 76-96 (ASQL…FLMT) and 428-448 (GLLI…YYII).

It belongs to the ODR-4 family.

The protein localises to the membrane. May play a role in the trafficking of a subset of G-protein coupled receptors. The protein is Protein odr-4 homolog (odr4) of Xenopus tropicalis (Western clawed frog).